Reading from the N-terminus, the 184-residue chain is Fruit protein pKIWI501 (184 aa).

Residues 1–184 (MATVEVTPAV…TEVPVDKTEE (184 aa)) are disordered. Low complexity-rich tracts occupy residues 25–36 (PQEPQPEAAVAA) and 53–65 (PEAV…PAAT). Residues 72-92 (EVAEAEEEVVEEPQEVPEEPV) are compositionally biased toward acidic residues. The span at 96 to 119 (AAKEVEATEGKAEPTGEMKDKTPE) shows a compositional bias: basic and acidic residues. Over residues 120 to 156 (ATDAPEAPAAAEEPTDAPEAPAVAEEPTNAPEAPAVG) the composition is skewed to low complexity. Residues 159-168 (PEAKEGKPDE) show a composition bias toward basic and acidic residues.

It to H.brasiliensis latex allergen Hev b 5.

The polypeptide is Fruit protein pKIWI501 (Actinidia deliciosa (Kiwi)).